The sequence spans 666 residues: MGQTKSKIKSKYASYLSFIKILLKRGGVKVSTKNLIKLFQIIEQFCPWFPEQGTLDLKDWKRIGKELKQAGRKGNIIPLTVWNDWAIIKAALEPFQTEEDSVSVSDAPGSCIIDCNENTRKKSQKETEGLHCEYVAEPVMAQSTQNVDYNQLQEVIYPETLKLEGKGPELVGPSESKPRGTSPLPAGQVPVTLQPQKQVKENKTQPPVAYQYWPPAELQYRPPPESQYGYPGMPPAPQGRAPYPQPPTRRLNPTAPPSRQGSKLHEIIDKSRKEGDTEAWQFPVTLEPMPPGEGAQEGEPPTVEARYKSFSIKKLKDMKEGVKQYGPNSPYMRTLLDSIAHGHRLIPYDWEILAKSSLSPSQFLQFKTWWIDGVQEQVRRNRAANPPVNIDADQLLGIGQNWSTISQQALMQNEAIEQVRAICLRAWEKIQDPGSTCPSFNTVRQGSKEPYPDFVARLQDVAQKSIADEKARKVIVELMAYENANPECQSAIKPLKGKVPAGSDVISEYVKACDGIGGAMHKAMLMAQAITGVVLGGQVRTFGRKCYNCGQIGHLKKNCPVLNKQNITIQATTTGREPPDLCPRCKKGKHWASQCRSKFDKNGQPLSGNEQRGQPQAPQQTGAFPIQPFVPQGFQGQQPPLSQVFQGISQLPQYNNCPPPQAAVQQ.

Gly-2 is lipidated: N-myristoyl glycine. The segment at 165–264 (GKGPELVGPS…APPSRQGSKL (100 aa)) is disordered. Positions 232 to 247 (GMPPAPQGRAPYPQPP) are enriched in pro residues. 2 CCHC-type zinc fingers span residues 544–561 (RKCY…NCPV) and 580–597 (DLCP…QCRS). The tract at residues 598–642 (KFDKNGQPLSGNEQRGQPQAPQQTGAFPIQPFVPQGFQGQQPPLS) is disordered. The span at 604–622 (QPLSGNEQRGQPQAPQQTG) shows a compositional bias: polar residues. Over residues 624–640 (FPIQPFVPQGFQGQQPP) the composition is skewed to low complexity.

Belongs to the beta type-B retroviral Gag protein family. HERV class-II K(HML-2) gag subfamily. Post-translationally, myristoylation is essential for retroviral assembly. Alteration of the glycine residue leads to a block in the budding of particles and an accumulation of Gag inside the cell. In terms of processing, specific enzymatic cleavages may yield mature proteins.

The protein localises to the cell membrane. The products of the Gag polyproteins of infectious retroviruses perform highly complex orchestrated tasks during the assembly, budding, maturation, and infection stages of the viral replication cycle. During viral assembly, the proteins form membrane associations and self-associations that ultimately result in budding of an immature virion from the infected cell. Gag precursors also function during viral assembly to selectively bind and package two plus strands of genomic RNA. Endogenous Gag proteins may have kept, lost or modified their original function during evolution. This is Endogenous retrovirus group K member 6 Gag polyprotein (ERVK-6) from Homo sapiens (Human).